Here is a 466-residue protein sequence, read N- to C-terminus: Putative chitinase 2 (466 aa).

The signal sequence occupies residues 1-17 (MYLTIWLVPLLAVGTWG). The GH18 domain occupies 20–380 (FNRFCHYNSW…MAVIHGLNAY (361 aa)). The cysteines at positions 24 and 49 are disulfide-linked. Glu-141 (proton donor) is an active-site residue. Residues 395 to 447 (YNKKILRARVSLRNYRRRNQQGKVAEMEQRIRNLEQELQQSMGNMAYERQQAQ) are a coiled coil.

Belongs to the glycosyl hydrolase 18 family. As to expression, prismatic layer of shell (at protein level). Expressed primarily in the mantle with highest level in the mantle edge and lower level in the mantle pallium.

The protein resides in the secreted. It catalyses the reaction Random endo-hydrolysis of N-acetyl-beta-D-glucosaminide (1-&gt;4)-beta-linkages in chitin and chitodextrins.. The sequence is that of Putative chitinase 2 from Margaritifera margaritifera (Freshwater pearl mussel).